The primary structure comprises 173 residues: MAEKRNIFLIGPMGAGKSTIGRQLAQMLGMEFIDSDAVIEERAGADIDWIFDLEGETGFRKREERIINELTQNQGVVLSTGGGSVLSKENRNVLSARGIVIYLETTVDKQFERTQRDKKRPLLQTENPRETLEALAKVRNPLYEEIADITLQTDEQSAKLVATHIIELIDNLQ.

Position 14 to 19 (glycine 14 to threonine 19) interacts with ATP. Serine 18 is a Mg(2+) binding site. Aspartate 36, arginine 60, and glycine 82 together coordinate substrate. Arginine 120 contacts ATP. Arginine 139 contributes to the substrate binding site. Glutamine 156 contributes to the ATP binding site.

The protein belongs to the shikimate kinase family. In terms of assembly, monomer. Mg(2+) serves as cofactor.

It is found in the cytoplasm. It carries out the reaction shikimate + ATP = 3-phosphoshikimate + ADP + H(+). It participates in metabolic intermediate biosynthesis; chorismate biosynthesis; chorismate from D-erythrose 4-phosphate and phosphoenolpyruvate: step 5/7. Functionally, catalyzes the specific phosphorylation of the 3-hydroxyl group of shikimic acid using ATP as a cosubstrate. This chain is Shikimate kinase, found in Actinobacillus pleuropneumoniae serotype 5b (strain L20).